Reading from the N-terminus, the 119-residue chain is Protein TusC (119 aa).

Belongs to the DsrF/TusC family. In terms of assembly, heterohexamer, formed by a dimer of trimers. The hexameric TusBCD complex contains 2 copies each of TusB, TusC and TusD. The TusBCD complex interacts with TusE.

It is found in the cytoplasm. Its function is as follows. Part of a sulfur-relay system required for 2-thiolation of 5-methylaminomethyl-2-thiouridine (mnm(5)s(2)U) at tRNA wobble positions. The sequence is that of Protein TusC from Escherichia coli O127:H6 (strain E2348/69 / EPEC).